The primary structure comprises 369 residues: Histidinol-phosphate aminotransferase 2 (369 aa).

The residue at position 229 (Lys-229) is an N6-(pyridoxal phosphate)lysine.

It belongs to the class-II pyridoxal-phosphate-dependent aminotransferase family. Histidinol-phosphate aminotransferase subfamily. As to quaternary structure, homodimer. The cofactor is pyridoxal 5'-phosphate.

It catalyses the reaction L-histidinol phosphate + 2-oxoglutarate = 3-(imidazol-4-yl)-2-oxopropyl phosphate + L-glutamate. Its pathway is amino-acid biosynthesis; L-histidine biosynthesis; L-histidine from 5-phospho-alpha-D-ribose 1-diphosphate: step 7/9. The sequence is that of Histidinol-phosphate aminotransferase 2 (hisC2) from Pseudomonas aeruginosa (strain ATCC 15692 / DSM 22644 / CIP 104116 / JCM 14847 / LMG 12228 / 1C / PRS 101 / PAO1).